Reading from the N-terminus, the 381-residue chain is tRNA pseudouridine synthase D (381 aa).

Catalysis depends on Asp-81, which acts as the Nucleophile. The TRUD domain occupies 160 to 335 (GMPNYFGSQR…TLGSRRFFWV (176 aa)).

Belongs to the pseudouridine synthase TruD family.

The enzyme catalyses uridine(13) in tRNA = pseudouridine(13) in tRNA. Functionally, responsible for synthesis of pseudouridine from uracil-13 in transfer RNAs. The sequence is that of tRNA pseudouridine synthase D from Helicobacter pylori (strain HPAG1).